Consider the following 260-residue polypeptide: Ribosomal RNA small subunit methyltransferase J (260 aa).

Residues Glu-125 to Arg-126 and Asp-179 contribute to the S-adenosyl-L-methionine site.

It belongs to the methyltransferase superfamily. RsmJ family.

The protein localises to the cytoplasm. The catalysed reaction is guanosine(1516) in 16S rRNA + S-adenosyl-L-methionine = N(2)-methylguanosine(1516) in 16S rRNA + S-adenosyl-L-homocysteine + H(+). In terms of biological role, specifically methylates the guanosine in position 1516 of 16S rRNA. The sequence is that of Ribosomal RNA small subunit methyltransferase J from Pseudomonas fluorescens (strain Pf0-1).